The primary structure comprises 275 residues: 3-methyl-2-oxobutanoate hydroxymethyltransferase (275 aa).

Positions 49 and 88 each coordinate Mg(2+). Residues 49–50 (DS), Asp-88, and Lys-118 contribute to the 3-methyl-2-oxobutanoate site. Glu-120 provides a ligand contact to Mg(2+). Catalysis depends on Glu-187, which acts as the Proton acceptor.

Belongs to the PanB family. Homodecamer; pentamer of dimers. Mg(2+) serves as cofactor.

Its subcellular location is the cytoplasm. It catalyses the reaction 3-methyl-2-oxobutanoate + (6R)-5,10-methylene-5,6,7,8-tetrahydrofolate + H2O = 2-dehydropantoate + (6S)-5,6,7,8-tetrahydrofolate. It participates in cofactor biosynthesis; (R)-pantothenate biosynthesis; (R)-pantoate from 3-methyl-2-oxobutanoate: step 1/2. Functionally, catalyzes the reversible reaction in which hydroxymethyl group from 5,10-methylenetetrahydrofolate is transferred onto alpha-ketoisovalerate to form ketopantoate. This is 3-methyl-2-oxobutanoate hydroxymethyltransferase from Bordetella petrii (strain ATCC BAA-461 / DSM 12804 / CCUG 43448).